The following is a 335-amino-acid chain: Beta-ketoacyl-[acyl-carrier-protein] synthase III (335 aa).

Active-site residues include cysteine 119 and histidine 261. The segment at 262 to 266 (QANQR) is ACP-binding. Asparagine 291 is a catalytic residue.

This sequence belongs to the thiolase-like superfamily. FabH family. In terms of assembly, homodimer.

Its subcellular location is the cytoplasm. The catalysed reaction is malonyl-[ACP] + acetyl-CoA + H(+) = 3-oxobutanoyl-[ACP] + CO2 + CoA. It participates in lipid metabolism; fatty acid biosynthesis. Catalyzes the condensation reaction of fatty acid synthesis by the addition to an acyl acceptor of two carbons from malonyl-ACP. Catalyzes the first condensation reaction which initiates fatty acid synthesis and may therefore play a role in governing the total rate of fatty acid production. Possesses both acetoacetyl-ACP synthase and acetyl transacylase activities. Its substrate specificity determines the biosynthesis of branched-chain and/or straight-chain of fatty acids. This Prochlorococcus marinus subsp. pastoris (strain CCMP1986 / NIES-2087 / MED4) protein is Beta-ketoacyl-[acyl-carrier-protein] synthase III.